The primary structure comprises 365 residues: Histidinol-phosphate aminotransferase 2 (365 aa).

Lys-221 carries the post-translational modification N6-(pyridoxal phosphate)lysine.

The protein belongs to the class-II pyridoxal-phosphate-dependent aminotransferase family. Histidinol-phosphate aminotransferase subfamily. Homodimer. Pyridoxal 5'-phosphate serves as cofactor.

It catalyses the reaction L-histidinol phosphate + 2-oxoglutarate = 3-(imidazol-4-yl)-2-oxopropyl phosphate + L-glutamate. It participates in amino-acid biosynthesis; L-histidine biosynthesis; L-histidine from 5-phospho-alpha-D-ribose 1-diphosphate: step 7/9. This Bradyrhizobium diazoefficiens (strain JCM 10833 / BCRC 13528 / IAM 13628 / NBRC 14792 / USDA 110) protein is Histidinol-phosphate aminotransferase 2 (hisC2).